The primary structure comprises 45 residues: Toxin Bcs III 15.09 (45 aa).

The 43-residue stretch at 2–44 folds into the EGF-like domain; that stretch reads QGTACTGEHAHNFCLNGGTCRHIQSLGEYYCICPEGYTGHRCE. 3 cysteine pairs are disulfide-bonded: C6–C21, C15–C32, and C34–C43.

It localises to the secreted. It is found in the nematocyst. Has both toxic and EGF activity. This Bunodosoma caissarum (Sea anemone) protein is Toxin Bcs III 15.09.